The following is a 340-amino-acid chain: Phosphate acyltransferase (340 aa).

It belongs to the PlsX family. As to quaternary structure, homodimer. Probably interacts with PlsY.

Its subcellular location is the cytoplasm. It carries out the reaction a fatty acyl-[ACP] + phosphate = an acyl phosphate + holo-[ACP]. Its pathway is lipid metabolism; phospholipid metabolism. In terms of biological role, catalyzes the reversible formation of acyl-phosphate (acyl-PO(4)) from acyl-[acyl-carrier-protein] (acyl-ACP). This enzyme utilizes acyl-ACP as fatty acyl donor, but not acyl-CoA. The protein is Phosphate acyltransferase of Nostoc punctiforme (strain ATCC 29133 / PCC 73102).